We begin with the raw amino-acid sequence, 269 residues long: Cytochrome c oxidase subunit 3 (269 aa).

The next 7 helical transmembrane spans lie at P19 to L39, H44 to F64, I87 to F107, L135 to A155, G170 to W190, F205 to A225, and I247 to W267.

This sequence belongs to the cytochrome c oxidase subunit 3 family. As to quaternary structure, component of the cytochrome c oxidase (complex IV, CIV), a multisubunit enzyme composed of a catalytic core of 3 subunits and several supernumerary subunits. The complex exists as a monomer or a dimer and forms supercomplexes (SCs) in the inner mitochondrial membrane with ubiquinol-cytochrome c oxidoreductase (cytochrome b-c1 complex, complex III, CIII).

Its subcellular location is the mitochondrion inner membrane. The catalysed reaction is 4 Fe(II)-[cytochrome c] + O2 + 8 H(+)(in) = 4 Fe(III)-[cytochrome c] + 2 H2O + 4 H(+)(out). Functionally, component of the cytochrome c oxidase, the last enzyme in the mitochondrial electron transport chain which drives oxidative phosphorylation. The respiratory chain contains 3 multisubunit complexes succinate dehydrogenase (complex II, CII), ubiquinol-cytochrome c oxidoreductase (cytochrome b-c1 complex, complex III, CIII) and cytochrome c oxidase (complex IV, CIV), that cooperate to transfer electrons derived from NADH and succinate to molecular oxygen, creating an electrochemical gradient over the inner membrane that drives transmembrane transport and the ATP synthase. Cytochrome c oxidase is the component of the respiratory chain that catalyzes the reduction of oxygen to water. Electrons originating from reduced cytochrome c in the intermembrane space (IMS) are transferred via the dinuclear copper A center (CU(A)) of subunit 2 and heme A of subunit 1 to the active site in subunit 1, a binuclear center (BNC) formed by heme A3 and copper B (CU(B)). The BNC reduces molecular oxygen to 2 water molecules using 4 electrons from cytochrome c in the IMS and 4 protons from the mitochondrial matrix. The sequence is that of Cytochrome c oxidase subunit 3 (cox3) from Schizosaccharomyces pombe (strain 972 / ATCC 24843) (Fission yeast).